The primary structure comprises 216 residues: Probable nicotinate-nucleotide adenylyltransferase (216 aa).

Belongs to the NadD family.

It carries out the reaction nicotinate beta-D-ribonucleotide + ATP + H(+) = deamido-NAD(+) + diphosphate. Its pathway is cofactor biosynthesis; NAD(+) biosynthesis; deamido-NAD(+) from nicotinate D-ribonucleotide: step 1/1. Catalyzes the reversible adenylation of nicotinate mononucleotide (NaMN) to nicotinic acid adenine dinucleotide (NaAD). The chain is Probable nicotinate-nucleotide adenylyltransferase from Geotalea daltonii (strain DSM 22248 / JCM 15807 / FRC-32) (Geobacter daltonii).